A 969-amino-acid polypeptide reads, in one-letter code: Translation initiation factor IF-2 (969 aa).

The segment covering 49-63 (HLRKSHGATDGDKRK) has biased composition (basic and acidic residues). 3 disordered regions span residues 49–85 (HLRKSHGATDGDKRKITLTRKHTSEIKQSDATGKART), 100–128 (DDVSDVAEQGQAQVAEADDDAELKRREEE), and 143–380 (LRER…SFQA). The segment covering 105-114 (VAEQGQAQVA) has biased composition (low complexity). A compositionally biased stretch (basic and acidic residues) spans 143–181 (LRERQERLEREEAERRAREEAAEAERRRAEEEAAAKRAA). Positions 182 to 206 (AEAAAAQQAAQQAAAAQQAAAPADS) are enriched in low complexity. Residues 209 to 260 (DEARAAAERAAQREAAKKAEDAAREAAEKARAEQEEIRKRREAAEAEARAIR) show a composition bias toward basic and acidic residues. Residues 301–323 (AQARPAAKKPAAAPAATPAPAGA) show a composition bias toward low complexity. Residues 353-366 (SSGGVDRGWRGGPK) show a composition bias toward gly residues. The tr-type G domain occupies 469 to 638 (PRPPVVTVMG…LLQAEVLELK (170 aa)). The G1 stretch occupies residues 478-485 (GHVDHGKT). GTP is bound at residue 478 to 485 (GHVDHGKT). Positions 503 to 507 (GITQH) are G2. The segment at 524–527 (DTPG) is G3. GTP-binding positions include 524–528 (DTPGH) and 578–581 (NKID). Residues 578–581 (NKID) form a G4 region. Positions 614 to 616 (SAK) are G5.

This sequence belongs to the TRAFAC class translation factor GTPase superfamily. Classic translation factor GTPase family. IF-2 subfamily.

The protein localises to the cytoplasm. Functionally, one of the essential components for the initiation of protein synthesis. Protects formylmethionyl-tRNA from spontaneous hydrolysis and promotes its binding to the 30S ribosomal subunits. Also involved in the hydrolysis of GTP during the formation of the 70S ribosomal complex. This Burkholderia multivorans (strain ATCC 17616 / 249) protein is Translation initiation factor IF-2.